The chain runs to 153 residues: Fimbrial protein EcpC (153 aa).

Residues 1–8 (MLKQVQKG) constitute a propeptide, leader sequence. The residue at position 9 (Phe9) is an N-methylphenylalanine. The chain crosses the membrane as a helical span at residues 9–29 (FTLIELMIVIAIIGILAAIAL). A disulfide bridge links Cys130 with Cys143.

Belongs to the N-Me-Phe pilin family.

Its subcellular location is the fimbrium. The protein resides in the membrane. The chain is Fimbrial protein EcpC (ecpC) from Eikenella corrodens.